The primary structure comprises 110 residues: Large ribosomal subunit protein uL22 (110 aa).

Belongs to the universal ribosomal protein uL22 family. Part of the 50S ribosomal subunit.

In terms of biological role, this protein binds specifically to 23S rRNA; its binding is stimulated by other ribosomal proteins, e.g. L4, L17, and L20. It is important during the early stages of 50S assembly. It makes multiple contacts with different domains of the 23S rRNA in the assembled 50S subunit and ribosome. The globular domain of the protein is located near the polypeptide exit tunnel on the outside of the subunit, while an extended beta-hairpin is found that lines the wall of the exit tunnel in the center of the 70S ribosome. This Chromohalobacter salexigens (strain ATCC BAA-138 / DSM 3043 / CIP 106854 / NCIMB 13768 / 1H11) protein is Large ribosomal subunit protein uL22.